Here is a 1131-residue protein sequence, read N- to C-terminus: Phytochrome (1131 aa).

Residues 1 to 30 (MASNSRHTQSQSTGSNNRRSSTNTNTTTNK) form a disordered region. Residues 9–29 (QSQSTGSNNRRSSTNTNTTTN) are compositionally biased toward low complexity. The GAF domain occupies 227 to 406 (DVGLLCDTVV…ALGLQLNMEL (180 aa)). Phytochromobilin is bound at residue C332. PAS domains are found at residues 621-692 (VASE…LRGE) and 755-826 (DYRS…TIVL). One can recognise a Histidine kinase domain in the interval 903 to 1123 (YIRQEIKNPL…LVNVEFPMAQ (221 aa)).

It belongs to the phytochrome family. In terms of assembly, homodimer. Post-translationally, contains one covalently linked phytochromobilin chromophore.

In terms of biological role, regulatory photoreceptor which exists in two forms that are reversibly interconvertible by light: the Pr form that absorbs maximally in the red region of the spectrum and the Pfr form that absorbs maximally in the far-red region. Photoconversion of Pr to Pfr induces an array of morphogenic responses, whereas reconversion of Pfr to Pr cancels the induction of those responses. Pfr controls the expression of a number of nuclear genes including those encoding the small subunit of ribulose-bisphosphate carboxylase, chlorophyll A/B binding protein, protochlorophyllide reductase, rRNA, etc. It also controls the expression of its own gene(s) in a negative feedback fashion. The sequence is that of Phytochrome from Pinus sylvestris (Scotch pine).